The sequence spans 157 residues: Large ribosomal subunit protein uL15 (157 aa).

A disordered region spans residues 1-64 (MKLNEIPAVP…MPLQRRLPKR (64 aa)). The segment covering 21-31 (RGPGSGNGKTA) has biased composition (gly residues).

The protein belongs to the universal ribosomal protein uL15 family. In terms of assembly, part of the 50S ribosomal subunit.

Its function is as follows. Binds to the 23S rRNA. This is Large ribosomal subunit protein uL15 from Magnetococcus marinus (strain ATCC BAA-1437 / JCM 17883 / MC-1).